Here is a 684-residue protein sequence, read N- to C-terminus: DNA-directed RNA polymerase subunit beta' (684 aa).

Zn(2+) is bound by residues Cys69, Cys71, Cys87, and Cys90. Asp489, Asp491, and Asp493 together coordinate Mg(2+).

The protein belongs to the RNA polymerase beta' chain family. RpoC1 subfamily. In terms of assembly, in plastids the minimal PEP RNA polymerase catalytic core is composed of four subunits: alpha, beta, beta', and beta''. When a (nuclear-encoded) sigma factor is associated with the core the holoenzyme is formed, which can initiate transcription. Requires Mg(2+) as cofactor. It depends on Zn(2+) as a cofactor.

The protein localises to the plastid. It is found in the chloroplast. The enzyme catalyses RNA(n) + a ribonucleoside 5'-triphosphate = RNA(n+1) + diphosphate. In terms of biological role, DNA-dependent RNA polymerase catalyzes the transcription of DNA into RNA using the four ribonucleoside triphosphates as substrates. This Morus indica (Mulberry) protein is DNA-directed RNA polymerase subunit beta'.